Reading from the N-terminus, the 208-residue chain is Ribosomal RNA large subunit methyltransferase E (208 aa).

5 residues coordinate S-adenosyl-L-methionine: Gly-63, Trp-65, Asp-83, Asp-99, and Asp-124. Lys-164 serves as the catalytic Proton acceptor.

It belongs to the class I-like SAM-binding methyltransferase superfamily. RNA methyltransferase RlmE family.

It is found in the cytoplasm. The catalysed reaction is uridine(2552) in 23S rRNA + S-adenosyl-L-methionine = 2'-O-methyluridine(2552) in 23S rRNA + S-adenosyl-L-homocysteine + H(+). Specifically methylates the uridine in position 2552 of 23S rRNA at the 2'-O position of the ribose in the fully assembled 50S ribosomal subunit. The sequence is that of Ribosomal RNA large subunit methyltransferase E from Enterobacter sp. (strain 638).